A 570-amino-acid polypeptide reads, in one-letter code: Rho GTPase-activating protein gacEE (570 aa).

The 107-residue stretch at 127-233 folds into the PH domain; sequence NSDISGVLLK…WVTTINNCID (107 aa). The C2 domain occupies 224-343; the sequence is WVTTINNCID…PNGSEISLWL (120 aa). Aspartate 260, aspartate 266, aspartate 312, aspartate 314, and aspartate 320 together coordinate Ca(2+). The Rho-GAP domain occupies 381 to 567; that stretch reads NSLEAIVKNR…FVFENSQQIL (187 aa).

Ca(2+) is required as a cofactor.

It localises to the cytoplasm. Its function is as follows. Rho GTPase-activating protein involved in the signal transduction pathway. The protein is Rho GTPase-activating protein gacEE (gacEE) of Dictyostelium discoideum (Social amoeba).